The following is a 605-amino-acid chain: Hepatocyte nuclear factor 1-alpha-A (605 aa).

The tract at residues 1 to 31 is dimerization; that stretch reads MASQLSYLQRELLQALLESGVTKEALKKALA. The HNF-p1 domain occupies 1 to 32; it reads MASQLSYLQRELLQALLESGVTKEALKKALAD. The tract at residues 57 to 81 is disordered; the sequence is QLPNGLGESHISEDESSDDGEDFTP. The 96-residue stretch at 85–180 folds into the POU-specific atypical domain; that stretch reads KELERLSPEE…IARLFTFTEF (96 aa). 6 interaction with DNA regions span residues 128 to 130, 141 to 147, 153 to 156, 206 to 209, 266 to 268, and 273 to 276; these read QRE, HLSQHLN, KTQK, RFKW, RVY, and NRRK. Positions 200 to 208 match the Nuclear localization signal motif; that stretch reads KKMRRNRFK. The segment at residues 202-282 is a DNA-binding region (homeobox; HNF1-type); sequence MRRNRFKWGP…NRRKEEAFRH (81 aa). The segment covering 321–335 has biased composition (polar residues); the sequence is DRSAVMANSQSTPSP. The segment at 321 to 343 is disordered; the sequence is DRSAVMANSQSTPSPSALEPSHS. Residues 448 to 453 form a not present in other members of the HNF1 family region; that stretch reads PSHQLH.

It belongs to the HNF1 homeobox family. As to quaternary structure, binds DNA as dimer. Forms a homodimer or heterodimer with HNF1-alpha-B. Potentially also form a heterodimer with HNF1-beta. In terms of tissue distribution, protein expressed in liver, stomach, small intestine, colon and kidney. Not expressed in spleen, lung, blood, heart muscle, skeletal muscle, testis and brain.

Its subcellular location is the nucleus. In terms of biological role, transcriptional activator that regulates the tissue specific expression of multiple genes, especially in pancreas and liver. Binds to the hepatocyte specific promoter element HP1. Binds to the inverted palindrome 5'-GTTAATNATTAAC-3'. This Xenopus laevis (African clawed frog) protein is Hepatocyte nuclear factor 1-alpha-A (hnf1a-a).